We begin with the raw amino-acid sequence, 326 residues long: Cytosolic sulfotransferase 7 (326 aa).

72–77 serves as a coordination point for 3'-phosphoadenylyl sulfate; it reads KSGTTW. H138 serves as the catalytic Proton acceptor. 3'-phosphoadenylyl sulfate is bound by residues R160, S168, Y226, and 292-294; that span reads RKG.

It belongs to the sulfotransferase 1 family.

The protein localises to the cytoplasm. Sulfotransferase that utilizes 3'-phospho-5'-adenylyl sulfate (PAPS) as sulfonate donor. The protein is Cytosolic sulfotransferase 7 (SOT7) of Arabidopsis thaliana (Mouse-ear cress).